Consider the following 360-residue polypeptide: Protein Wnt-2 (360 aa).

Residues Met1–Ser25 form the signal peptide. Intrachain disulfides connect Cys76–Cys87, Cys127–Cys135, Cys137–Cys157, Cys206–Cys220, Cys208–Cys215, Cys278–Cys309, Cys294–Cys304, Cys308–Cys348, Cys324–Cys339, Cys326–Cys336, and Cys331–Cys332. Ser212 carries O-palmitoleoyl serine; by PORCN lipidation. The N-linked (GlcNAc...) asparagine glycan is linked to Asn295.

It belongs to the Wnt family. In terms of processing, palmitoleoylation is required for efficient binding to frizzled receptors. Depalmitoleoylation leads to Wnt signaling pathway inhibition.

The protein resides in the secreted. Its subcellular location is the extracellular space. The protein localises to the extracellular matrix. In terms of biological role, ligand for members of the frizzled family of seven transmembrane receptors. Probable developmental protein. May be a signaling molecule which affects the development of discrete regions of tissues. Is likely to signal over only few cell diameters. In Rhinolophus ferrumequinum (Greater horseshoe bat), this protein is Protein Wnt-2 (WNT2).